Reading from the N-terminus, the 128-residue chain is L-ectoine synthase (128 aa).

The protein belongs to the ectoine synthase family.

It catalyses the reaction (2S)-4-acetamido-2-aminobutanoate = L-ectoine + H2O. The protein operates within amine and polyamine biosynthesis; ectoine biosynthesis; L-ectoine from L-aspartate 4-semialdehyde: step 3/3. In terms of biological role, catalyzes the circularization of gamma-N-acetyl-alpha,gamma-diaminobutyric acid (ADABA) to ectoine (1,4,5,6-tetrahydro-2-methyl-4-pyrimidine carboxylic acid), which is an excellent osmoprotectant. In Aliivibrio fischeri (strain ATCC 700601 / ES114) (Vibrio fischeri), this protein is L-ectoine synthase.